Consider the following 308-residue polypeptide: Mitochondrial import receptor subunit TOM40B (308 aa).

The required for mitochondrial targeting stretch occupies residues 281–308 (PLPVTLALGAFLNHWRNRFHCGFSITVG).

It belongs to the Tom40 family. In terms of assembly, forms part of the preprotein translocase of the outer mitochondrial membrane (TOM complex) containing TOMM22, TOMM40, TOMM40L and TOMM70. Interacts with mitochondrial targeting sequences. Widely expressed. Higher levels in heart, brain and liver, very low level in testis.

The protein resides in the mitochondrion outer membrane. Functionally, potential channel-forming protein implicated in import of protein precursors into mitochondria. The polypeptide is Mitochondrial import receptor subunit TOM40B (Rattus norvegicus (Rat)).